Here is a 528-residue protein sequence, read N- to C-terminus: J domain-containing protein APJ1 (528 aa).

The J domain maps to 4 to 73; that stretch reads NTSLYDSLNV…RALYDQYGTT (70 aa). The CR-type zinc-finger motif lies at 193-274; sequence GKTAKLGLNR…CQGLGFIKER (82 aa). CXXCXGXG motif repeat units lie at residues 206–213, 218–225, 246–253, and 262–269; these read CSVCDGHG, CTCKTCKG, CADCGGAG, and CQQCQGLG. Basic and acidic residues predominate over residues 485–499; the sequence is NERDSRKRNNRRFDE. The segment at 485–528 is disordered; it reads NERDSRKRNNRRFDESNINNNNETKRNKYSSPVSGFYDHDINGY.

The protein localises to the cytoplasm. It is found in the nucleus. In terms of biological role, putative chaperone involved in protein folding. Interferes with propagation of [PSI+] prion when overproduced. This Saccharomyces cerevisiae (strain ATCC 204508 / S288c) (Baker's yeast) protein is J domain-containing protein APJ1 (APJ1).